The chain runs to 864 residues: Leucine--tRNA ligase (864 aa).

A 'HIGH' region motif is present at residues 42 to 52 (PYPSGKLHMGH). The 'KMSKS' region motif lies at 619 to 623 (KMSKS). Lys622 contacts ATP.

It belongs to the class-I aminoacyl-tRNA synthetase family.

The protein resides in the cytoplasm. The enzyme catalyses tRNA(Leu) + L-leucine + ATP = L-leucyl-tRNA(Leu) + AMP + diphosphate. The protein is Leucine--tRNA ligase of Wigglesworthia glossinidia brevipalpis.